The chain runs to 325 residues: Ribosomal RNA small subunit methyltransferase H (325 aa).

S-adenosyl-L-methionine is bound by residues 38-40 (GGY), Asp55, Phe82, Asp103, and Gln110. Disordered stretches follow at residues 256–275 (SGGD…AARA) and 281–307 (PARK…RSAV).

This sequence belongs to the methyltransferase superfamily. RsmH family.

Its subcellular location is the cytoplasm. It catalyses the reaction cytidine(1402) in 16S rRNA + S-adenosyl-L-methionine = N(4)-methylcytidine(1402) in 16S rRNA + S-adenosyl-L-homocysteine + H(+). Specifically methylates the N4 position of cytidine in position 1402 (C1402) of 16S rRNA. The sequence is that of Ribosomal RNA small subunit methyltransferase H from Sphingopyxis alaskensis (strain DSM 13593 / LMG 18877 / RB2256) (Sphingomonas alaskensis).